The chain runs to 236 residues: Small ribosomal subunit protein uS2c (236 aa).

It belongs to the universal ribosomal protein uS2 family.

It localises to the plastid. It is found in the chloroplast. This chain is Small ribosomal subunit protein uS2c (rps2), found in Morus indica (Mulberry).